Consider the following 510-residue polypeptide: GMP synthase [glutamine-hydrolyzing] (510 aa).

The 190-residue stretch at 5 to 194 (DILVLDFGSQ…FAKICGCEST (190 aa)) folds into the Glutamine amidotransferase type-1 domain. The Nucleophile role is filled by cysteine 82. Residues histidine 169 and glutamate 171 contribute to the active site. The region spanning 195–385 (WNMGSFAKKE…LGLSRDIVYR (191 aa)) is the GMPS ATP-PPase domain. 222-228 (SGGVDSS) provides a ligand contact to ATP.

Homodimer.

The catalysed reaction is XMP + L-glutamine + ATP + H2O = GMP + L-glutamate + AMP + diphosphate + 2 H(+). It participates in purine metabolism; GMP biosynthesis; GMP from XMP (L-Gln route): step 1/1. Catalyzes the synthesis of GMP from XMP. The polypeptide is GMP synthase [glutamine-hydrolyzing] (Campylobacter fetus subsp. fetus (strain 82-40)).